A 505-amino-acid chain; its full sequence is Protein dml1 (505 aa).

The disordered stretch occupies residues 330 to 358 (LPEDMSNHTQPVQNPEDRRTQASKGGSSK).

It belongs to the misato family.

The protein resides in the mitochondrion. Its function is as follows. Involved in the partitioning of the mitochondrial organelle and mitochondrial DNA (mtDNA) inheritance. The sequence is that of Protein dml1 (dml1) from Aspergillus fumigatus (strain ATCC MYA-4609 / CBS 101355 / FGSC A1100 / Af293) (Neosartorya fumigata).